A 325-amino-acid chain; its full sequence is Tetraacyldisaccharide 4'-kinase (325 aa).

58–65 (TVGGSGKT) contributes to the ATP binding site.

It belongs to the LpxK family.

It catalyses the reaction a lipid A disaccharide + ATP = a lipid IVA + ADP + H(+). It participates in glycolipid biosynthesis; lipid IV(A) biosynthesis; lipid IV(A) from (3R)-3-hydroxytetradecanoyl-[acyl-carrier-protein] and UDP-N-acetyl-alpha-D-glucosamine: step 6/6. Its function is as follows. Transfers the gamma-phosphate of ATP to the 4'-position of a tetraacyldisaccharide 1-phosphate intermediate (termed DS-1-P) to form tetraacyldisaccharide 1,4'-bis-phosphate (lipid IVA). This is Tetraacyldisaccharide 4'-kinase from Coxiella burnetii (strain Dugway 5J108-111).